The sequence spans 323 residues: Leucine-rich repeat-containing protein 46 (323 aa).

LRR repeat units lie at residues 49–70 (ELET…EKLR), 71–92 (NIHS…ACIT), 93–114 (SLRF…LDLQ), and 115–135 (YLQF…DELP). Positions 146 to 188 (NPCTNQEGYRKMVIGALPLLLDLDKQPILERWTSDEEDKSSDD) constitute an LRRCT domain. The residue at position 178 (threonine 178) is a Phosphothreonine. Residues serine 179, serine 185, and serine 186 each carry the phosphoserine modification. Residues 203-228 (RGFFKDLEQELHQHQERRQQAALTEH) adopt a coiled-coil conformation. Residues 249–323 (MAGDCSSTAT…TKMTNKKSTK (75 aa)) form a disordered region. Over residues 267-316 (PKATSSTQTASTTKKQVSKNQKSSVQARKGALAATTSKTSQAATPSMTKM) the composition is skewed to low complexity. Serine 303 carries the post-translational modification Phosphoserine.

Testis-specific (at protein level).

It is found in the cell projection. Its subcellular location is the cilium. The protein localises to the flagellum. Its function is as follows. Required for normal spermatogenesis and male fertility. Plays an important role in sperm flagellum biogenesis. This is Leucine-rich repeat-containing protein 46 (Lrrc46) from Mus musculus (Mouse).